A 546-amino-acid polypeptide reads, in one-letter code: DNA replication factor Cdt1 (546 aa).

A compositionally biased stretch (basic and acidic residues) spans 1 to 11 (MEQRRVTDFFA). Residues 1–23 (MEQRRVTDFFARRRPGPPRIAPP) carry the PIP-box K+4 motif motif. Disordered stretches follow at residues 1 to 118 (MEQR…QDQD) and 143 to 165 (SAQDAGESCTPEAEGRPEEPCGE). Positions 28–45 (RTPSPARPALRAPASATS) are enriched in low complexity. Thr-29 is modified (phosphothreonine; by MAPK8). Ser-31 carries the post-translational modification Phosphoserine. The short motif at 68–70 (RRL) is the Cyclin-binding motif element. Ser-93 bears the Phosphoserine; by MAPK8 mark. Residues 150 to 190 (SCTPEAEGRPEEPCGEKAPAYQRFHALAQPGLPGLVLPYKY) are interaction with GMNN. Residues 155 to 164 (AEGRPEEPCG) are compositionally biased toward basic and acidic residues. Ser-318 carries the phosphoserine; by MAPK8 modification. A phosphoserine mark is found at Ser-380 and Ser-394. The tract at residues 383–415 (ALRSAAPSSPGSPRPALPATPPATPPAASPSAL) is disordered. Positions 392-410 (PGSPRPALPATPPATPPAA) are enriched in pro residues. Residues 451-546 (LERLPELARV…AHQTRAEEGL (96 aa)) form an interaction with LRWD1 region.

It belongs to the Cdt1 family. In terms of assembly, interacts with GMNN; the interaction inhibits binding of the MCM complex to origins of replication. Interacts with MCM6. Interacts with CDC6; are mutually dependent on one another for loading MCM complexes onto chromatin. Interacts with PCNA. Interacts with LRWD1 during G1 phase and during mitosis. Interacts with NDC80 subunit of the NDC80 complex; leading to kinetochore localization. Interacts with GRWD1; origin binding of GRWD1 is dependent on CDT1. Interacts with KAT7. Interacts with ubiquitin-binding protein FAF1; the interaction is likely to promote CDT1 degradation. In terms of processing, two independent E3 ubiquitin ligase complexes, SCF(SKP2) and the DCX(DTL) complex, mediated CDT1 degradation in S phase. Ubiquitinated by the DCX(DTL) complex, in response to DNA damage, leading to its degradation. Ubiquitination by the DCX(DTL) complex is necessary to ensure proper cell cycle regulation and is PCNA-dependent: interacts with PCNA via its PIP-box, while the presence of the containing the 'K+4' motif in the PIP box, recruit the DCX(DTL) complex, leading to its degradation. Phosphorylation at Thr-29 by CDK2 targets CDT1 for ubiquitination by SCF(SKP2) E3 ubiquitin ligase and subsequent degradation. The interaction with GMNN protects it against ubiquitination. Deubiquitinated by USP37. Ubiquitinated and degraded by the SCF(FBXO31) complex during the G2 phase to prevent re-replication. Phosphorylation by cyclin A-dependent kinases at Thr-29 targets CDT1 for ubiquitynation by SCF(SKP2) E3 ubiquitin ligase and subsequent degradation. Phosphorylated at Thr-29 by MAPK8/JNK1, which blocks replication licensing in response to stress. Binding to GMNN is not affected by phosphorylation.

It is found in the nucleus. The protein localises to the chromosome. It localises to the centromere. Its subcellular location is the kinetochore. Its function is as follows. Required for both DNA replication and mitosis. DNA replication licensing factor, required for pre-replication complex assembly. Cooperates with CDC6 and the origin recognition complex (ORC) during G1 phase of the cell cycle to promote the loading of the mini-chromosome maintenance (MCM) complex onto DNA to generate pre-replication complexes (pre-RC). Required also for mitosis by promoting stable kinetochore-microtubule attachments. Potential oncogene. This chain is DNA replication factor Cdt1, found in Homo sapiens (Human).